A 319-amino-acid polypeptide reads, in one-letter code: Secreted effector protein sopD2 (319 aa).

A Required to target late endocytic compartments motif is present at residues Trp-37 to Phe-44.

It belongs to the SopD family.

Its subcellular location is the secreted. It localises to the host cell membrane. Functionally, effector proteins function to alter host cell physiology and promote bacterial survival in host tissues. Contributes to the formation of Salmonella-induced filaments (Sifs) in infected epithelial cells and to replication in macrophages. The polypeptide is Secreted effector protein sopD2 (sopD2) (Salmonella typhimurium (strain LT2 / SGSC1412 / ATCC 700720)).